Here is a 473-residue protein sequence, read N- to C-terminus: Photosystem II CP43 reaction center protein (473 aa).

The propeptide occupies 1-14 (MKTLYSPRRFYPVE). T15 bears the N-acetylthreonine mark. A Phosphothreonine modification is found at T15. Transmembrane regions (helical) follow at residues 69 to 93 (LFEV…PHLA), 134 to 155 (LLGP…KDRN), 178 to 200 (KALY…RKIS), 255 to 275 (KPFA…LSYS), and 291 to 312 (WFNN…ASQA). E367 contacts [CaMn4O5] cluster. Residues 447 to 471 (RARAAAAGFEKGIDRDLEPVLFMTP) form a helical membrane-spanning segment.

It belongs to the PsbB/PsbC family. PsbC subfamily. PSII is composed of 1 copy each of membrane proteins PsbA, PsbB, PsbC, PsbD, PsbE, PsbF, PsbH, PsbI, PsbJ, PsbK, PsbL, PsbM, PsbT, PsbX, PsbY, PsbZ, Psb30/Ycf12, at least 3 peripheral proteins of the oxygen-evolving complex and a large number of cofactors. It forms dimeric complexes. Binds multiple chlorophylls and provides some of the ligands for the Ca-4Mn-5O cluster of the oxygen-evolving complex. It may also provide a ligand for a Cl- that is required for oxygen evolution. PSII binds additional chlorophylls, carotenoids and specific lipids. serves as cofactor.

Its subcellular location is the plastid. It is found in the chloroplast thylakoid membrane. Functionally, one of the components of the core complex of photosystem II (PSII). It binds chlorophyll and helps catalyze the primary light-induced photochemical processes of PSII. PSII is a light-driven water:plastoquinone oxidoreductase, using light energy to abstract electrons from H(2)O, generating O(2) and a proton gradient subsequently used for ATP formation. The polypeptide is Photosystem II CP43 reaction center protein (Ranunculus macranthus (Large buttercup)).